The sequence spans 416 residues: Gamma-glutamyl phosphate reductase (416 aa).

Belongs to the gamma-glutamyl phosphate reductase family.

The protein resides in the cytoplasm. It carries out the reaction L-glutamate 5-semialdehyde + phosphate + NADP(+) = L-glutamyl 5-phosphate + NADPH + H(+). It functions in the pathway amino-acid biosynthesis; L-proline biosynthesis; L-glutamate 5-semialdehyde from L-glutamate: step 2/2. In terms of biological role, catalyzes the NADPH-dependent reduction of L-glutamate 5-phosphate into L-glutamate 5-semialdehyde and phosphate. The product spontaneously undergoes cyclization to form 1-pyrroline-5-carboxylate. The chain is Gamma-glutamyl phosphate reductase from Glaesserella parasuis serovar 5 (strain SH0165) (Haemophilus parasuis).